Consider the following 378-residue polypeptide: Ribosomal RNA large subunit methyltransferase G (378 aa).

This sequence belongs to the methyltransferase superfamily. RlmG family.

Its subcellular location is the cytoplasm. The catalysed reaction is guanosine(1835) in 23S rRNA + S-adenosyl-L-methionine = N(2)-methylguanosine(1835) in 23S rRNA + S-adenosyl-L-homocysteine + H(+). In terms of biological role, specifically methylates the guanine in position 1835 (m2G1835) of 23S rRNA. This is Ribosomal RNA large subunit methyltransferase G from Salmonella paratyphi A (strain ATCC 9150 / SARB42).